The following is a 422-amino-acid chain: UDP-N-acetylglucosamine 1-carboxyvinyltransferase (422 aa).

22-23 provides a ligand contact to phosphoenolpyruvate; that stretch reads KN. Arg-94 provides a ligand contact to UDP-N-acetyl-alpha-D-glucosamine. The Proton donor role is filled by Cys-118. A 2-(S-cysteinyl)pyruvic acid O-phosphothioketal modification is found at Cys-118. Residues 123-127, Asp-309, and Ile-331 each bind UDP-N-acetyl-alpha-D-glucosamine; that span reads RPVDL.

This sequence belongs to the EPSP synthase family. MurA subfamily.

The protein resides in the cytoplasm. It catalyses the reaction phosphoenolpyruvate + UDP-N-acetyl-alpha-D-glucosamine = UDP-N-acetyl-3-O-(1-carboxyvinyl)-alpha-D-glucosamine + phosphate. It participates in cell wall biogenesis; peptidoglycan biosynthesis. Cell wall formation. Adds enolpyruvyl to UDP-N-acetylglucosamine. This is UDP-N-acetylglucosamine 1-carboxyvinyltransferase from Cereibacter sphaeroides (strain ATCC 17025 / ATH 2.4.3) (Rhodobacter sphaeroides).